A 202-amino-acid polypeptide reads, in one-letter code: Tetranectin (202 aa).

Positions 1 to 21 (MELWGAYLLLCLFSLLTQVTT) are cleaved as a signal peptide. O-linked (GalNAc...) threonine glycosylation is present at Thr25. 3 cysteine pairs are disulfide-bonded: Cys71–Cys81, Cys98–Cys197, and Cys173–Cys189. Residues 77–198 (VHMKCFLAFT…CRDQLPYICQ (122 aa)) enclose the C-type lectin domain.

In terms of assembly, homotrimer. In terms of tissue distribution, found in plasma.

It is found in the secreted. Functionally, tetranectin binds to plasminogen and to isolated kringle 4. May be involved in the packaging of molecules destined for exocytosis. Plays a role in retinal function. This Homo sapiens (Human) protein is Tetranectin (CLEC3B).